The sequence spans 92 residues: MTDQPLAGFTHFDAEGRAVMVDVSGKADTERSATARGSVLMQPETLALILQGGVKKGDVLSVARLAGIMGAKRTPDLIPLCHPLMLTSVKVD.

Substrate is bound at residue 80–82 (LCH).

Belongs to the MoaC family. As to quaternary structure, homohexamer; trimer of dimers.

It catalyses the reaction (8S)-3',8-cyclo-7,8-dihydroguanosine 5'-triphosphate = cyclic pyranopterin phosphate + diphosphate. It participates in cofactor biosynthesis; molybdopterin biosynthesis. Its function is as follows. Catalyzes the conversion of (8S)-3',8-cyclo-7,8-dihydroguanosine 5'-triphosphate to cyclic pyranopterin monophosphate (cPMP). This Azospirillum brasilense protein is Cyclic pyranopterin monophosphate synthase (moaC).